A 1135-amino-acid chain; its full sequence is Potassium channel subfamily T member 2 (1135 aa).

Over Met-1–Arg-63 the chain is Cytoplasmic. A helical membrane pass occupies residues Leu-64 to Glu-84. The Extracellular portion of the chain corresponds to Asn-85–Ser-101. A glycan (N-linked (GlcNAc...) asparagine) is linked at Asn-99. The chain crosses the membrane as a helical span at residues Leu-102 to Leu-122. The Cytoplasmic portion of the chain corresponds to Gly-123–Arg-137. The chain crosses the membrane as a helical span at residues Ile-138 to Ser-158. The Extracellular portion of the chain corresponds to Leu-159 to Val-164. The helical transmembrane segment at Pro-165 to His-185 threads the bilayer. The Cytoplasmic portion of the chain corresponds to Arg-186 to Gln-198. Residues Val-199–His-219 traverse the membrane as a helical segment. Over Leu-220–Asn-228 the chain is Extracellular. Positions Leu-229–Thr-249 form an intramembrane region, pore-forming. At Pro-250–Lys-256 the chain is on the extracellular side. Residues Leu-257–Leu-277 form a helical membrane-spanning segment. Over Ala-278–Leu-1135 the chain is Cytoplasmic. 2 RCK N-terminal domains span residues Glu-299–Val-435 and Asn-718–Leu-858. Disordered stretches follow at residues Val-977 to Leu-1010, Trp-1017 to Ile-1036, and Ser-1113 to Leu-1135. The span at Trp-1017–Gly-1030 shows a compositional bias: basic residues. Residues Arg-1118–Gln-1127 are compositionally biased toward polar residues.

It belongs to the potassium channel family. Calcium-activated (TC 1.A.1.3) subfamily. KCa4.2/KCNT2 sub-subfamily. Homotetramer. Forms heteromeric channels with KCNT1; these heterodimer channels differ from the homomers in their unitary conductance, kinetic behavior, subcellular localization, and response to activation of protein kinase C. In terms of processing, phosphorylated by protein kinase C. Phosphorylation of the C-terminal domain inhibits channel activity.

The protein resides in the cell membrane. It catalyses the reaction K(+)(in) = K(+)(out). With respect to regulation, are normally in a closed state unless activated by an increase in intracellular Na(+) and Cl(-). Inhibited upon stimulation of G-protein coupled receptors, such as CHRM1 and GRM1. There is conflicting data about the effect of ATP on KNCT2 channels activity. Intracellular ATP was initially report to inhibit the channel activity. However, others studies conclude that KNCT2 channels are not inhibited by intracellular ATP. Its function is as follows. Sodium-activated and chloride-activated potassium channel. Produces rapidly activating outward rectifier K(+) currents. Contributes to regulate neuronal excitability. The polypeptide is Potassium channel subfamily T member 2 (KCNT2) (Homo sapiens (Human)).